A 159-amino-acid polypeptide reads, in one-letter code: Phospholipase A2 AP-PLA2-I (159 aa).

Positions 1–19 (MNFLVVIVTTVSLAGAASA) are cleaved as a signal peptide. Residues 20-23 (GEIQ) constitute a propeptide that is removed on maturation. Cystine bridges form between Cys-51-Cys-159, Cys-53-Cys-69, Cys-68-Cys-139, Cys-75-Cys-132, Cys-85-Cys-125, and Cys-110-Cys-130. Positions 52, 54, and 56 each coordinate Ca(2+). His-72 is a catalytic residue. A Ca(2+)-binding site is contributed by Asp-73. Asp-133 is a catalytic residue.

The protein belongs to the phospholipase A2 family. Group I subfamily. As to quaternary structure, homodimer. The cofactor is Ca(2+). As to expression, expressed by the venom gland.

It is found in the secreted. It carries out the reaction a 1,2-diacyl-sn-glycero-3-phosphocholine + H2O = a 1-acyl-sn-glycero-3-phosphocholine + a fatty acid + H(+). Functionally, starfish phospholipase A2 (PLA2) that has hemorrhagic and capillary permeability-increasing activities and hence is considered to be deeply involved in the local inflammation. Shows hemolytic activity only in the presence of phosphatidylcholine (PC). PLA2 catalyzes the calcium-dependent hydrolysis of the 2-acyl groups in 3-sn-phosphoglycerides. This chain is Phospholipase A2 AP-PLA2-I, found in Acanthaster planci (Crown-of-thorns starfish).